The primary structure comprises 168 residues: Photosystem I assembly protein Ycf3 (168 aa).

3 TPR repeats span residues 35-68, 72-105, and 120-153; these read AFTY…EIDP, SYIL…NPFL, and GEQA…TPGN.

It belongs to the Ycf3 family.

The protein resides in the plastid. It localises to the chloroplast thylakoid membrane. Functionally, essential for the assembly of the photosystem I (PSI) complex. May act as a chaperone-like factor to guide the assembly of the PSI subunits. The sequence is that of Photosystem I assembly protein Ycf3 from Coffea arabica (Arabian coffee).